Reading from the N-terminus, the 130-residue chain is Small ribosomal subunit protein uS11 (130 aa).

This sequence belongs to the universal ribosomal protein uS11 family. In terms of assembly, part of the 30S ribosomal subunit. Interacts with proteins S7 and S18. Binds to IF-3.

In terms of biological role, located on the platform of the 30S subunit, it bridges several disparate RNA helices of the 16S rRNA. Forms part of the Shine-Dalgarno cleft in the 70S ribosome. The protein is Small ribosomal subunit protein uS11 of Synechococcus sp. (strain WH7803).